The following is a 503-amino-acid chain: Sodium/hydrogen exchanger 3 (503 aa).

The Cytoplasmic portion of the chain corresponds to methionine 1–serine 22. A helical transmembrane segment spans residues valine 23 to leucine 43. Residues glutamate 44 to glutamate 51 are Vacuolar-facing. Asparagine 50 carries an N-linked (GlcNAc...) asparagine glycan. Residues serine 52–glycine 72 form a helical membrane-spanning segment. Topologically, residues lysine 73–arginine 76 are cytoplasmic. An intramembrane region (helical) is located at residues isoleucine 77–alanine 97. Over glycine 98–asparagine 109 the chain is Cytoplasmic. A helical membrane pass occupies residues phenylalanine 110–phenylalanine 130. Over glycine 131–lysine 138 the chain is Vacuolar. A helical transmembrane segment spans residues methionine 139–threonine 159. Topologically, residues aspartate 160–proline 174 are cytoplasmic. Residues leucine 175 to phenylalanine 195 form a helical membrane-spanning segment. Residues asparagine 196–phenylalanine 219 lie on the Vacuolar side of the membrane. The chain crosses the membrane as a helical span at residues tyrosine 220–isoleucine 240. Residues lysine 241–tyrosine 265 lie on the Cytoplasmic side of the membrane. Residues methionine 266–methionine 286 form a helical membrane-spanning segment. Topologically, residues serine 287–threonine 305 are vacuolar. Residue asparagine 293 is glycosylated (N-linked (GlcNAc...) asparagine). The helical transmembrane segment at phenylalanine 306 to leucine 326 threads the bilayer. Topologically, residues aspartate 327–serine 345 are cytoplasmic. A helical transmembrane segment spans residues serine 346–leucine 366. At serine 367 to glutamine 383 the chain is on the vacuolar side. Asparagine 368 is a glycosylation site (N-linked (GlcNAc...) asparagine). A helical transmembrane segment spans residues valine 384–threonine 406. The Cytoplasmic portion of the chain corresponds to threonine 407–asparagine 416. Residues alanine 417–leucine 437 traverse the membrane as a helical segment. Over threonine 438 to histidine 503 the chain is Vacuolar.

Belongs to the monovalent cation:proton antiporter 1 (CPA1) transporter (TC 2.A.36) family. In terms of tissue distribution, expressed in roots.

The protein localises to the vacuole membrane. It carries out the reaction Na(+)(in) + H(+)(out) = Na(+)(out) + H(+)(in). The enzyme catalyses K(+)(in) + H(+)(out) = K(+)(out) + H(+)(in). May act in low affinity electroneutral exchange of protons for cations such as Na(+) or K(+) across membranes. May also exchange Li(+) and Cs(+) with a lower affinity. This Arabidopsis thaliana (Mouse-ear cress) protein is Sodium/hydrogen exchanger 3 (NHX3).